The following is a 147-amino-acid chain: Putative pre-16S rRNA nuclease (147 aa).

Belongs to the YqgF nuclease family.

The protein resides in the cytoplasm. Functionally, could be a nuclease involved in processing of the 5'-end of pre-16S rRNA. The sequence is that of Putative pre-16S rRNA nuclease from Polynucleobacter necessarius subsp. necessarius (strain STIR1).